The primary structure comprises 588 residues: ATP-dependent lipid A-core flippase (588 aa).

6 consecutive transmembrane segments (helical) span residues 23–43, 56–76, 141–161, 162–182, 257–277, and 278–298; these read FWPV…IDAG, FITI…IGIT, DALT…TVMM, VICW…GIIV, LVIA…STVI, and TISA…IKPM. The region spanning 28 to 310 is the ABC transmembrane type-1 domain; it reads LLGVLANILY…LTTLNATIQR (283 aa). The region spanning 342–576 is the ABC transporter domain; that stretch reads IEFKHVYHAY…DGHYAQLYKV (235 aa). 375-382 serves as a coordination point for ATP; that stretch reads GHSGSGKT.

Belongs to the ABC transporter superfamily. Lipid exporter (TC 3.A.1.106) family. As to quaternary structure, homodimer.

The protein resides in the cell inner membrane. It carries out the reaction ATP + H2O + lipid A-core oligosaccharideSide 1 = ADP + phosphate + lipid A-core oligosaccharideSide 2.. In terms of biological role, involved in lipopolysaccharide (LPS) biosynthesis. Translocates lipid A-core from the inner to the outer leaflet of the inner membrane. Transmembrane domains (TMD) form a pore in the inner membrane and the ATP-binding domain (NBD) is responsible for energy generation. This Legionella pneumophila (strain Lens) protein is ATP-dependent lipid A-core flippase.